The following is a 231-amino-acid chain: Large ribosomal subunit protein uL1 (231 aa).

The protein belongs to the universal ribosomal protein uL1 family. In terms of assembly, part of the 50S ribosomal subunit.

Binds directly to 23S rRNA. The L1 stalk is quite mobile in the ribosome, and is involved in E site tRNA release. Functionally, protein L1 is also a translational repressor protein, it controls the translation of the L11 operon by binding to its mRNA. The sequence is that of Large ribosomal subunit protein uL1 from Legionella pneumophila (strain Paris).